The primary structure comprises 464 residues: Signal recognition particle 54 kDa protein (464 aa).

GTP-binding positions include 104-111, 184-188, and 242-245; these read GLQGSGKT, DTAGR, and TKLD.

Belongs to the GTP-binding SRP family. SRP54 subfamily. As to quaternary structure, part of the signal recognition particle protein translocation system, which is composed of SRP and FtsY. Archaeal SRP consists of a 7S RNA molecule of 300 nucleotides and two protein subunits: SRP54 and SRP19.

The protein localises to the cytoplasm. The catalysed reaction is GTP + H2O = GDP + phosphate + H(+). Its function is as follows. Involved in targeting and insertion of nascent membrane proteins into the cytoplasmic membrane. Binds to the hydrophobic signal sequence of the ribosome-nascent chain (RNC) as it emerges from the ribosomes. The SRP-RNC complex is then targeted to the cytoplasmic membrane where it interacts with the SRP receptor FtsY. This Halorubrum lacusprofundi (strain ATCC 49239 / DSM 5036 / JCM 8891 / ACAM 34) protein is Signal recognition particle 54 kDa protein.